A 443-amino-acid chain; its full sequence is Glutamate--tRNA ligase 1 (443 aa).

The 'HIGH' region signature appears at 8–18 (PSPTGRLHVGN). A 'KMSKS' region motif is present at residues 239–243 (KLSKR). Lysine 242 provides a ligand contact to ATP.

The protein belongs to the class-I aminoacyl-tRNA synthetase family. Glutamate--tRNA ligase type 1 subfamily. Monomer.

The protein resides in the cytoplasm. It catalyses the reaction tRNA(Glu) + L-glutamate + ATP = L-glutamyl-tRNA(Glu) + AMP + diphosphate. Functionally, catalyzes the attachment of glutamate to tRNA(Glu) in a two-step reaction: glutamate is first activated by ATP to form Glu-AMP and then transferred to the acceptor end of tRNA(Glu). The sequence is that of Glutamate--tRNA ligase 1 from Rhizorhabdus wittichii (strain DSM 6014 / CCUG 31198 / JCM 15750 / NBRC 105917 / EY 4224 / RW1) (Sphingomonas wittichii).